Consider the following 383-residue polypeptide: Anhydro-N-acetylmuramic acid kinase (383 aa).

9 to 16 (GTSLDGID) serves as a coordination point for ATP.

It belongs to the anhydro-N-acetylmuramic acid kinase family.

The catalysed reaction is 1,6-anhydro-N-acetyl-beta-muramate + ATP + H2O = N-acetyl-D-muramate 6-phosphate + ADP + H(+). Its pathway is amino-sugar metabolism; 1,6-anhydro-N-acetylmuramate degradation. It participates in cell wall biogenesis; peptidoglycan recycling. In terms of biological role, catalyzes the specific phosphorylation of 1,6-anhydro-N-acetylmuramic acid (anhMurNAc) with the simultaneous cleavage of the 1,6-anhydro ring, generating MurNAc-6-P. Is required for the utilization of anhMurNAc either imported from the medium or derived from its own cell wall murein, and thus plays a role in cell wall recycling. The polypeptide is Anhydro-N-acetylmuramic acid kinase (Bacillus cereus (strain ATCC 10987 / NRS 248)).